We begin with the raw amino-acid sequence, 335 residues long: Chitin synthase export chaperone (335 aa).

Transmembrane regions (helical) follow at residues 55 to 75, 92 to 112, 129 to 149, 164 to 184, 193 to 213, 220 to 240, and 259 to 279; these read IIFQVGNTFIHIGALPVILIM, FHFLSCFLFLTCMSLVVDAGV, GAISGTMWSLVNFGFLGFQFY, TLCAFLLTFIISLFTFIPSWG, TVGLFVVLYLFNLIFVVVYIL, IFILQDIWMIGAVALGTFFFV, and HYIDGTFFATVTNLFAVMMVY.

This sequence belongs to the CHS7 family. Interacts with CHS3.

It localises to the endoplasmic reticulum membrane. Functionally, chaperone required for the export of the chitin synthase CHS3 from the endoplasmic reticulum. This Yarrowia lipolytica (strain CLIB 122 / E 150) (Yeast) protein is Chitin synthase export chaperone (CHS7).